Consider the following 354-residue polypeptide: Aspartate carbamoyltransferase catalytic subunit (354 aa).

Arginine 67 and threonine 68 together coordinate carbamoyl phosphate. Lysine 95 contacts L-aspartate. Carbamoyl phosphate is bound by residues arginine 117, histidine 150, and glutamine 153. 2 residues coordinate L-aspartate: arginine 190 and arginine 261. 2 residues coordinate carbamoyl phosphate: glycine 302 and proline 303.

It belongs to the aspartate/ornithine carbamoyltransferase superfamily. ATCase family. Heterododecamer (2C3:3R2) of six catalytic PyrB chains organized as two trimers (C3), and six regulatory PyrI chains organized as three dimers (R2).

It carries out the reaction carbamoyl phosphate + L-aspartate = N-carbamoyl-L-aspartate + phosphate + H(+). It participates in pyrimidine metabolism; UMP biosynthesis via de novo pathway; (S)-dihydroorotate from bicarbonate: step 2/3. Catalyzes the condensation of carbamoyl phosphate and aspartate to form carbamoyl aspartate and inorganic phosphate, the committed step in the de novo pyrimidine nucleotide biosynthesis pathway. The sequence is that of Aspartate carbamoyltransferase catalytic subunit from Synechococcus sp. (strain RCC307).